We begin with the raw amino-acid sequence, 740 residues long: Vertnin (740 aa).

3 disordered regions span residues 485–506 (EAGEEETGKAGSGAPLTSRGLI), 560–616 (PGMQ…DQNV), and 653–673 (TQSQPHSGSLPSQTLAEAPGG). Over residues 578–604 (QKPEGRQKPEEQQKPEGRQKPEGRQKP) the composition is skewed to basic and acidic residues. Residues 653–667 (TQSQPHSGSLPSQTL) are compositionally biased toward polar residues.

It belongs to the vertnin family.

Its subcellular location is the nucleus. Its function is as follows. Acts as a transcription factor that regulates development of thoracic vertebrae. The polypeptide is Vertnin (Vrtn) (Mus musculus (Mouse)).